The following is a 498-amino-acid chain: NAD(P)H-quinone oxidoreductase subunit 2, chloroplastic (498 aa).

A run of 14 helical transmembrane segments spans residues L18–L38, I51–T71, F87–S107, L111–A131, L134–Y154, F168–G188, I211–P231, P244–T264, W278–V298, M306–D326, Y337–L357, F379–G399, G411–L431, and I470–I490.

It belongs to the complex I subunit 2 family. In terms of assembly, NDH is composed of at least 16 different subunits, 5 of which are encoded in the nucleus.

It is found in the plastid. The protein localises to the chloroplast thylakoid membrane. It carries out the reaction a plastoquinone + NADH + (n+1) H(+)(in) = a plastoquinol + NAD(+) + n H(+)(out). The enzyme catalyses a plastoquinone + NADPH + (n+1) H(+)(in) = a plastoquinol + NADP(+) + n H(+)(out). In terms of biological role, NDH shuttles electrons from NAD(P)H:plastoquinone, via FMN and iron-sulfur (Fe-S) centers, to quinones in the photosynthetic chain and possibly in a chloroplast respiratory chain. The immediate electron acceptor for the enzyme in this species is believed to be plastoquinone. Couples the redox reaction to proton translocation, and thus conserves the redox energy in a proton gradient. This is NAD(P)H-quinone oxidoreductase subunit 2, chloroplastic from Adiantum capillus-veneris (Maidenhair fern).